We begin with the raw amino-acid sequence, 311 residues long: Aspartate carbamoyltransferase catalytic subunit (311 aa).

Residues arginine 55 and threonine 56 each coordinate carbamoyl phosphate. An L-aspartate-binding site is contributed by lysine 85. Residues arginine 106, histidine 135, and glutamine 138 each contribute to the carbamoyl phosphate site. Positions 168 and 230 each coordinate L-aspartate. 2 residues coordinate carbamoyl phosphate: leucine 268 and proline 269.

It belongs to the aspartate/ornithine carbamoyltransferase superfamily. ATCase family. Heterododecamer (2C3:3R2) of six catalytic PyrB chains organized as two trimers (C3), and six regulatory PyrI chains organized as three dimers (R2).

It catalyses the reaction carbamoyl phosphate + L-aspartate = N-carbamoyl-L-aspartate + phosphate + H(+). Its pathway is pyrimidine metabolism; UMP biosynthesis via de novo pathway; (S)-dihydroorotate from bicarbonate: step 2/3. In terms of biological role, catalyzes the condensation of carbamoyl phosphate and aspartate to form carbamoyl aspartate and inorganic phosphate, the committed step in the de novo pyrimidine nucleotide biosynthesis pathway. In Pectobacterium carotovorum subsp. carotovorum (strain PC1), this protein is Aspartate carbamoyltransferase catalytic subunit.